The following is a 452-amino-acid chain: Bifunctional protein GlmU (452 aa).

The interval 1–226 (MSLHIIILAA…LHEVEGVNNR (226 aa)) is pyrophosphorylase. Residues 8-11 (LAAG), Lys22, Gln73, 78-79 (GT), 100-102 (YGD), Gly136, Glu151, Asn166, and Asn224 each bind UDP-N-acetyl-alpha-D-glucosamine. Asp102 provides a ligand contact to Mg(2+). Mg(2+) is bound at residue Asn224. Positions 227–247 (IQLAALERAYQQQVAEELMLA) are linker. The N-acetyltransferase stretch occupies residues 248–452 (GATLRDPARV…IDGWTRPVKK (205 aa)). Residues Arg330 and Lys348 each contribute to the UDP-N-acetyl-alpha-D-glucosamine site. Catalysis depends on His360, which acts as the Proton acceptor. Residues Tyr363 and Asn374 each coordinate UDP-N-acetyl-alpha-D-glucosamine. Acetyl-CoA contacts are provided by residues Ala377, 383-384 (NY), Ser402, Ala420, and Arg437.

It in the N-terminal section; belongs to the N-acetylglucosamine-1-phosphate uridyltransferase family. In the C-terminal section; belongs to the transferase hexapeptide repeat family. In terms of assembly, homotrimer. It depends on Mg(2+) as a cofactor.

The protein localises to the cytoplasm. The enzyme catalyses alpha-D-glucosamine 1-phosphate + acetyl-CoA = N-acetyl-alpha-D-glucosamine 1-phosphate + CoA + H(+). The catalysed reaction is N-acetyl-alpha-D-glucosamine 1-phosphate + UTP + H(+) = UDP-N-acetyl-alpha-D-glucosamine + diphosphate. The protein operates within nucleotide-sugar biosynthesis; UDP-N-acetyl-alpha-D-glucosamine biosynthesis; N-acetyl-alpha-D-glucosamine 1-phosphate from alpha-D-glucosamine 6-phosphate (route II): step 2/2. Its pathway is nucleotide-sugar biosynthesis; UDP-N-acetyl-alpha-D-glucosamine biosynthesis; UDP-N-acetyl-alpha-D-glucosamine from N-acetyl-alpha-D-glucosamine 1-phosphate: step 1/1. It participates in bacterial outer membrane biogenesis; LPS lipid A biosynthesis. Catalyzes the last two sequential reactions in the de novo biosynthetic pathway for UDP-N-acetylglucosamine (UDP-GlcNAc). The C-terminal domain catalyzes the transfer of acetyl group from acetyl coenzyme A to glucosamine-1-phosphate (GlcN-1-P) to produce N-acetylglucosamine-1-phosphate (GlcNAc-1-P), which is converted into UDP-GlcNAc by the transfer of uridine 5-monophosphate (from uridine 5-triphosphate), a reaction catalyzed by the N-terminal domain. This chain is Bifunctional protein GlmU, found in Hahella chejuensis (strain KCTC 2396).